The following is a 418-amino-acid chain: Serine--tRNA ligase (418 aa).

227–229 (TSE) serves as a coordination point for L-serine. ATP-binding positions include 258-260 (RRE) and valine 274. Glutamate 281 serves as a coordination point for L-serine. 345-348 (ELTS) lines the ATP pocket. Position 380 (threonine 380) interacts with L-serine.

It belongs to the class-II aminoacyl-tRNA synthetase family. Type-1 seryl-tRNA synthetase subfamily. As to quaternary structure, homodimer. The tRNA molecule binds across the dimer.

It localises to the cytoplasm. It catalyses the reaction tRNA(Ser) + L-serine + ATP = L-seryl-tRNA(Ser) + AMP + diphosphate + H(+). The enzyme catalyses tRNA(Sec) + L-serine + ATP = L-seryl-tRNA(Sec) + AMP + diphosphate + H(+). Its pathway is aminoacyl-tRNA biosynthesis; selenocysteinyl-tRNA(Sec) biosynthesis; L-seryl-tRNA(Sec) from L-serine and tRNA(Sec): step 1/1. Functionally, catalyzes the attachment of serine to tRNA(Ser). Is also able to aminoacylate tRNA(Sec) with serine, to form the misacylated tRNA L-seryl-tRNA(Sec), which will be further converted into selenocysteinyl-tRNA(Sec). This Rhodococcus opacus (strain B4) protein is Serine--tRNA ligase.